Reading from the N-terminus, the 137-residue chain is Large ribosomal subunit protein uL16 (137 aa).

Belongs to the universal ribosomal protein uL16 family. As to quaternary structure, part of the 50S ribosomal subunit.

Functionally, binds 23S rRNA and is also seen to make contacts with the A and possibly P site tRNAs. The sequence is that of Large ribosomal subunit protein uL16 from Rhodopseudomonas palustris (strain HaA2).